The chain runs to 381 residues: Ubiquitin-associated protein 1-like (381 aa).

Residues 4–50 (LDGVPFKLPKGFVIGTEPLPGPELSVPACGEVLLGSMHDFSLERTAL) form the UMA domain. Disordered regions lie at residues 87-141 (LAPA…PGRR) and 185-228 (SLCP…LRSH). Residues 95–104 (RDPEAGHQER) show a composition bias toward basic and acidic residues. Residues 105–123 (PEEEGEDEAEASSGSEEEP) are compositionally biased toward acidic residues. The segment covering 124-141 (APSSLQPGSPASPGPGRR) has biased composition (low complexity). Pro residues predominate over residues 197-216 (ASPPGPAPQHPAAPASPPRP).

The chain is Ubiquitin-associated protein 1-like (UBAP1L) from Homo sapiens (Human).